The following is a 110-amino-acid chain: Large ribosomal subunit protein uL22 (110 aa).

This sequence belongs to the universal ribosomal protein uL22 family. Part of the 50S ribosomal subunit.

Functionally, this protein binds specifically to 23S rRNA; its binding is stimulated by other ribosomal proteins, e.g. L4, L17, and L20. It is important during the early stages of 50S assembly. It makes multiple contacts with different domains of the 23S rRNA in the assembled 50S subunit and ribosome. The globular domain of the protein is located near the polypeptide exit tunnel on the outside of the subunit, while an extended beta-hairpin is found that lines the wall of the exit tunnel in the center of the 70S ribosome. The polypeptide is Large ribosomal subunit protein uL22 (Pectobacterium atrosepticum (strain SCRI 1043 / ATCC BAA-672) (Erwinia carotovora subsp. atroseptica)).